The sequence spans 189 residues: Large ribosomal subunit protein bL9 (189 aa).

Belongs to the bacterial ribosomal protein bL9 family.

Binds to the 23S rRNA. This Cereibacter sphaeroides (strain KD131 / KCTC 12085) (Rhodobacter sphaeroides) protein is Large ribosomal subunit protein bL9.